Consider the following 469-residue polypeptide: Adenosylhomocysteinase (469 aa).

Residues T63, D139, and E164 each coordinate substrate. An NAD(+)-binding site is contributed by 165–167; it reads TTT. K194 and D198 together coordinate substrate. NAD(+) is bound by residues N199, 228–233, E251, N300, 321–323, and N375; these read GYGDVG and IGH.

Belongs to the adenosylhomocysteinase family. It depends on NAD(+) as a cofactor.

It localises to the cytoplasm. It catalyses the reaction S-adenosyl-L-homocysteine + H2O = L-homocysteine + adenosine. It participates in amino-acid biosynthesis; L-homocysteine biosynthesis; L-homocysteine from S-adenosyl-L-homocysteine: step 1/1. Its function is as follows. May play a key role in the regulation of the intracellular concentration of adenosylhomocysteine. The polypeptide is Adenosylhomocysteinase (Pseudomonas entomophila (strain L48)).